A 242-amino-acid polypeptide reads, in one-letter code: MTKLFIPYIMGNKDLIENATLLSENGADIIEIGVPFSDPVADGPVIMEAGQQAIKQGITIDYIFEQLEKHGNQIKCQYVLMTYYNIICHYGEQAFFEKCRDTGVYGLIIPDLPFELSQRLKQQFSHYGVKIISLVAMTTDDKRIKDIVSYAEGFIYTVTMNATTGQNGAFHPELKRKIESIKAIANVPVVAGFGIRSPQHVADIKEVADGIVIGSEIVKRFKSNTREEIIKYLQSIQQTLNN.

Catalysis depends on proton acceptor residues Glu-31 and Asp-42.

It belongs to the TrpA family. In terms of assembly, tetramer of two alpha and two beta chains.

It catalyses the reaction (1S,2R)-1-C-(indol-3-yl)glycerol 3-phosphate + L-serine = D-glyceraldehyde 3-phosphate + L-tryptophan + H2O. Its pathway is amino-acid biosynthesis; L-tryptophan biosynthesis; L-tryptophan from chorismate: step 5/5. The alpha subunit is responsible for the aldol cleavage of indoleglycerol phosphate to indole and glyceraldehyde 3-phosphate. This Staphylococcus aureus (strain MRSA252) protein is Tryptophan synthase alpha chain.